A 334-amino-acid polypeptide reads, in one-letter code: SH3 and cysteine-rich domain-containing protein 3 (334 aa).

A disordered region spans residues 1–26; sequence MAQYDQLEDKDSLDIHDNPPAPENVV. A compositionally biased stretch (basic and acidic residues) spans 7–17; that stretch reads LEDKDSLDIHD. Residues 62-113 form a Phorbol-ester/DAG-type zinc finger; the sequence is PHKFKDHYCKKPKFCDVCARMIVLNNKFALRCKNCKTNIHHSCQSYVQFQRC. The segment covering 178 to 190 has biased composition (acidic residues); sequence EEEAQQPKEDEEG. A disordered region spans residues 178-215; sequence EEEAQQPKEDEEGAEGKQDGDKKDKTATDDKNKKQQQT. The segment covering 191 to 210 has biased composition (basic and acidic residues); the sequence is AEGKQDGDKKDKTATDDKNK. 2 SH3 domains span residues 217-276 and 277-334; these read SQSH…RVRA and GERV…LHEL.

As to quaternary structure, component of a calcium channel complex with CACNA1S. Expressed in muscles at the muscle triad.

The protein resides in the cytoplasm. The protein localises to the cell membrane. Its subcellular location is the sarcolemma. It is found in the T-tubule. Its function is as follows. Required for normal excitation-contraction coupling in skeletal muscle and for normal muscle contraction in response to membrane depolarization. Required for normal Ca(2+) release from the sarcplasmic reticulum, which ultimately leads to muscle contraction. Probably functions via its effects on muscle calcium channels. Increases CACNA1S channel activity, in addition to its role in enhancing the expression of CACNA1S at the cell membrane. Has a redundant role in promoting the expression of the calcium channel CACNA1S at the cell membrane. The protein is SH3 and cysteine-rich domain-containing protein 3 of Danio rerio (Zebrafish).